A 76-amino-acid chain; its full sequence is Anaredoxin (76 aa).

The HNH domain occupies 24-66 (CMVCWEVNSKANGHHLIPYSEGGSADIQNMMTLCPSCHTKYHK).

The protein belongs to the HNH nuclease family.

Putative P-450 reductase. This is Anaredoxin from Nostoc sp. (strain PCC 7120 / SAG 25.82 / UTEX 2576).